Here is a 503-residue protein sequence, read N- to C-terminus: Aromatase (503 aa).

Substrate contacts are provided by Asp309 and Met374. Cys437 provides a ligand contact to heme.

It belongs to the cytochrome P450 family. Heme is required as a cofactor.

It is found in the membrane. It carries out the reaction testosterone + 3 reduced [NADPH--hemoprotein reductase] + 3 O2 = 17beta-estradiol + formate + 3 oxidized [NADPH--hemoprotein reductase] + 4 H2O + 4 H(+). The catalysed reaction is androst-4-ene-3,17-dione + 3 reduced [NADPH--hemoprotein reductase] + 3 O2 = estrone + formate + 3 oxidized [NADPH--hemoprotein reductase] + 4 H2O + 4 H(+). Its function is as follows. Catalyzes the formation of aromatic C18 estrogens from C19 androgens. The protein is Aromatase (CYP19A1) of Callithrix jacchus (White-tufted-ear marmoset).